We begin with the raw amino-acid sequence, 763 residues long: Phosphoglycerol transferase I (763 aa).

A run of 4 helical transmembrane segments spans residues 1-21 (MSEL…AWKA), 26-46 (WWFA…ITLY), 77-97 (ILPG…LGWI), and 108-128 (FGYS…SPAF).

Belongs to the OpgB family.

The protein localises to the cell inner membrane. It catalyses the reaction a phosphatidylglycerol + a membrane-derived-oligosaccharide D-glucose = a 1,2-diacyl-sn-glycerol + a membrane-derived-oligosaccharide 6-(glycerophospho)-D-glucose.. Its pathway is glycan metabolism; osmoregulated periplasmic glucan (OPG) biosynthesis. In terms of biological role, transfers a phosphoglycerol residue from phosphatidylglycerol to the membrane-bound nascent glucan backbones. This chain is Phosphoglycerol transferase I, found in Escherichia fergusonii (strain ATCC 35469 / DSM 13698 / CCUG 18766 / IAM 14443 / JCM 21226 / LMG 7866 / NBRC 102419 / NCTC 12128 / CDC 0568-73).